The primary structure comprises 408 residues: uncharacterized protein (408 aa).

Over residues 376–386 (NELNDPNSVYN) the composition is skewed to polar residues. A disordered region spans residues 376 to 408 (NELNDPNSVYNSPEFDHQGDQKKLTEENGCVVQ). Over residues 389–401 (EFDHQGDQKKLTE) the composition is skewed to basic and acidic residues.

This is an uncharacterized protein from Acanthamoeba polyphaga (Amoeba).